A 212-amino-acid polypeptide reads, in one-letter code: uncharacterized protein (212 aa).

Belongs to the mimivirus R683/R861 family.

This is an uncharacterized protein from Acanthamoeba polyphaga (Amoeba).